The following is a 335-amino-acid chain: Glyceraldehyde-3-phosphate dehydrogenase 2 (335 aa).

Residues 12–13, aspartate 35, arginine 79, and serine 121 each bind NAD(+); that span reads RI. Residues 152–154 and threonine 183 contribute to the D-glyceraldehyde 3-phosphate site; that span reads SCT. The Nucleophile role is filled by cysteine 153. Residue asparagine 184 participates in NAD(+) binding. Residues arginine 198, 211–212, and arginine 234 contribute to the D-glyceraldehyde 3-phosphate site; that span reads TG. NAD(+) is bound at residue asparagine 316.

The protein belongs to the glyceraldehyde-3-phosphate dehydrogenase family. As to quaternary structure, homotetramer.

It localises to the cytoplasm. It catalyses the reaction D-glyceraldehyde 3-phosphate + phosphate + NAD(+) = (2R)-3-phospho-glyceroyl phosphate + NADH + H(+). It participates in carbohydrate degradation; glycolysis; pyruvate from D-glyceraldehyde 3-phosphate: step 1/5. With respect to regulation, inhibited by pentalenolactone. Functionally, catalyzes the oxidative phosphorylation of glyceraldehyde 3-phosphate (G3P) to 1,3-bisphosphoglycerate (BPG) using the cofactor NAD. The first reaction step involves the formation of a hemiacetal intermediate between G3P and a cysteine residue, and this hemiacetal intermediate is then oxidized to a thioester, with concomitant reduction of NAD to NADH. The reduced NADH is then exchanged with the second NAD, and the thioester is attacked by a nucleophilic inorganic phosphate to produce BPG. The protein is Glyceraldehyde-3-phosphate dehydrogenase 2 (gap2) of Streptomyces avermitilis (strain ATCC 31267 / DSM 46492 / JCM 5070 / NBRC 14893 / NCIMB 12804 / NRRL 8165 / MA-4680).